The primary structure comprises 142 residues: HTH-type transcriptional regulator MntR (142 aa).

The HTH dtxR-type domain occupies 1-63; it reads MPTPSMEDYI…YEKYRGLILT (63 aa). Residues aspartate 8, glutamate 11, histidine 77, glutamate 99, glutamate 102, and histidine 103 each contribute to the Mn(2+) site.

It belongs to the DtxR/MntR family. As to quaternary structure, homodimer.

The protein localises to the cytoplasm. DNA binding is strongly activated by Mn(2+). Central regulator of manganese homeostasis. This is HTH-type transcriptional regulator MntR from Listeria welshimeri serovar 6b (strain ATCC 35897 / DSM 20650 / CCUG 15529 / CIP 8149 / NCTC 11857 / SLCC 5334 / V8).